A 364-amino-acid chain; its full sequence is Mannonate dehydratase (364 aa).

The protein belongs to the mannonate dehydratase family. Requires Fe(2+) as cofactor. It depends on Mn(2+) as a cofactor.

The catalysed reaction is D-mannonate = 2-dehydro-3-deoxy-D-gluconate + H2O. Its pathway is carbohydrate metabolism; pentose and glucuronate interconversion. Catalyzes the dehydration of D-mannonate. This is Mannonate dehydratase from Streptococcus equi subsp. zooepidemicus (strain MGCS10565).